The sequence spans 105 residues: Protamine-2 (105 aa).

Residues 1-74 (MVRYRMRSPS…RRSCRRRRRH (74 aa)) are disordered. Phosphoserine is present on residues Ser-8 and Ser-10. The span at 33–42 (NPERVEDYGR) shows a compositional bias: basic and acidic residues. The span at 43-74 (THRGHHRHRRCSRKRLHRIHKRRRSCRRRRRH) shows a compositional bias: basic residues.

It belongs to the protamine P2 family. Interacts with TDRP. Post-translationally, proteolytic processing into mature chains is required for histone eviction during spermatogenesis. Transition proteins (TNP1 and TNP2) are required for processing. As to expression, testis.

The protein resides in the nucleus. Its subcellular location is the chromosome. Its function is as follows. Protamines substitute for histones in the chromatin of sperm during the haploid phase of spermatogenesis. They compact sperm DNA into a highly condensed, stable and inactive complex. The polypeptide is Protamine-2 (Prm2) (Rattus tunneyi (Tunney's rat)).